Reading from the N-terminus, the 477-residue chain is MIRRLQDNGDLIRAFPRVHFVGIGGAGMTGIAEVMLTLGYEVSGSDNADNAATRRLATLGARVMRGHSAANVLGTDCVVVSSAIREDNPELMEARSQRIPIMPRAAMLAELMRFRHGIAVAGTHGKTTTTSLIAAVLSEGGLDPTFVIGGQLLAAGANAKLGAGQWLVVEADESDGSFLRLNPLVAVVTNIDADHLENYGNDFSRIKDAFTEFLQRLPFYGLALLCLDDPEVAELAGKARRHVMTYGIDAAADVRAEDVVQDGARMCFTLCLPEGKVIPVTLALPGRHNVLNALAASAVGWQLGVPPEVIGRALKSFVGIGRRFNDLGDVAIGNGACVRLIDDYGHHPRELEAVFAAVRGGWPDKRLVVAFQPHRYSRTRDQFDAFAAVLSSVDALVLSEVYPAGEVPIPGADAKALARAIRARGRSEPVVVGQVASLIEVLPDVLQEGDLLLMMGAGDIGSIAQRIAHDGFVFGEV.

122–128 (GTHGKTT) is a binding site for ATP.

The protein belongs to the MurCDEF family.

It localises to the cytoplasm. It carries out the reaction UDP-N-acetyl-alpha-D-muramate + L-alanine + ATP = UDP-N-acetyl-alpha-D-muramoyl-L-alanine + ADP + phosphate + H(+). It functions in the pathway cell wall biogenesis; peptidoglycan biosynthesis. Functionally, cell wall formation. This chain is UDP-N-acetylmuramate--L-alanine ligase, found in Xylella fastidiosa (strain 9a5c).